The primary structure comprises 111 residues: Iron-sulfur cluster assembly protein CyaY (111 aa).

This sequence belongs to the frataxin family.

In terms of biological role, involved in iron-sulfur (Fe-S) cluster assembly. May act as a regulator of Fe-S biogenesis. In Cupriavidus necator (strain ATCC 17699 / DSM 428 / KCTC 22496 / NCIMB 10442 / H16 / Stanier 337) (Ralstonia eutropha), this protein is Iron-sulfur cluster assembly protein CyaY.